The chain runs to 499 residues: MSTLGDLLAEHTMLPGSAVDHLHAVVGEWQMLSDLSFADYLMWVRRDDGVLVCVAQIRPNTAPTVLLADSVGKLAGPDDLPVVTMAFESGAIGRGSDKAGQGSRTRPGLDVEAVPVRHQGQVVAVLTHQTALAERRLTSPLEGAYLDCANDLLHMLAEGTFPNIGDLAMSRSSPRVGDGFIRLNEGGEVVFASPNAISAYHRMGLNSELDGHNLVAITRPLISDPFEAQELANHIRDSLAGGSSMRMEVDANGAAILLRTLPLVAGGKSLGAAVLIRDVTEVKRRDRALLSKDATIREIHHRVKNNLQTVAALLRLQARRTSNEEAREALIESVRRVTSIALVHDALSMSVDEEVNLDQVVDRILPIMNDVASVDTPIRINRVGNLGVLDADRATALIMVITELVQNAIEHAFDAKTEQGCVTIKAERSARWLDVVVHDDGRGLPVGFSLEKSDRLGLQIVRTLVTAELDGSLGMHDVPSGGTDVVLRVPIGRRSRGAQ.

The segment at 4–149 (LGDLLAEHTM…PLEGAYLDCA (146 aa)) is GAF. The PAS-like stretch occupies residues 178–289 (DGFIRLNEGG…TEVKRRDRAL (112 aa)). A Histidine kinase domain is found at 298–493 (EIHHRVKNNL…DVVLRVPIGR (196 aa)). His301 carries the phosphohistidine; by autocatalysis modification.

Autophosphorylated.

Its subcellular location is the cytoplasm. It catalyses the reaction ATP + protein L-histidine = ADP + protein N-phospho-L-histidine.. In terms of biological role, member of the two-component regulatory system PdtaR/PdtaS. This two-component system plays an essential role in mycobacterial adaptation to poor nutrient conditions. Nutrient deprivation results in increasing intracellular concentrations of cyclic diguanosine monophosphate (c-di-GMP), which binds to the PdtaS sensor and promotes its autophosphorylation, leading to the activation of the signaling cascade. The phosphate group is then transferred to PdtaR. The sequence is that of Sensor histidine kinase PdtaS from Mycolicibacterium smegmatis (strain ATCC 700084 / mc(2)155) (Mycobacterium smegmatis).